Here is a 640-residue protein sequence, read N- to C-terminus: MKNKNSEQNTHYTIGEQDIHYFHEGKHIYAYEFMGAHKACEEGIEGIRFTTWAPNAKSICVIGDFNYWQVEDKNYMEPITDAGLWSVFIPNAKNGDKYKFVVTNKDTSHYVYKSDPYAFFSELRPNTASIITTETQYTWSDDKWLEKRAKTNYYDNPMNVYELHLASWKTKNGKFLTYDELSETLPQYIKEMGYTHVEFMPLHEHPLDASWGYQPTGFYSVNSRHGDIIGLKRLVDKLHNNDIGVILDWVPGHFCKDQHGLIYFDGSPCYEYQEPTKAINKGWETHNFDLGRNEVKCFLISNAMYWINEFHIDGLRVDAVSNILYLNYDREDGQWIPNIYGGHENLEGIAFLKELNGVLKHTCKGVITIAEESSSWPDISTPVEKGGLGFDFKWNMGWMNDTLRYISLDPVYRKYHHNLITFSMVYHYSEKFILSISHDEVVHGKKSLINKMWGDLWNKYAGLRLYMSYMIGHPGKKLIFMGSEFVQFVEWREYEQLQWQVVDQYESHKQTLHFFKKLNDFYHNETALWQCDYDHHGFRWIDANNSQQSILSFIRSSKDNKQKLIFICNFTPVTYYDYHLGVPDAGSYKEVFNSDNLEFGGSGQVMATEIFSSPQSSHGFEQRITIKIPPMATLVLKLIK.

The active-site Nucleophile is the aspartate 318. Glutamate 371 serves as the catalytic Proton donor.

Belongs to the glycosyl hydrolase 13 family. GlgB subfamily. In terms of assembly, monomer.

It catalyses the reaction Transfers a segment of a (1-&gt;4)-alpha-D-glucan chain to a primary hydroxy group in a similar glucan chain.. The protein operates within glycan biosynthesis; glycogen biosynthesis. Functionally, catalyzes the formation of the alpha-1,6-glucosidic linkages in glycogen by scission of a 1,4-alpha-linked oligosaccharide from growing alpha-1,4-glucan chains and the subsequent attachment of the oligosaccharide to the alpha-1,6 position. This chain is 1,4-alpha-glucan branching enzyme GlgB, found in Francisella tularensis subsp. holarctica (strain FTNF002-00 / FTA).